Here is a 20-residue protein sequence, read N- to C-terminus: GYKVTYFAIRGLAEPIXLLL.

The 20-residue stretch at 1-20 folds into the GST N-terminal domain; it reads GYKVTYFAIRGLAEPIXLLL. Residue Y6 participates in glutathione binding.

This sequence belongs to the GST superfamily. Sigma family.

It catalyses the reaction RX + glutathione = an S-substituted glutathione + a halide anion + H(+). Conjugation of reduced glutathione to a wide number of exogenous and endogenous hydrophobic electrophiles. This Ascaris suum (Pig roundworm) protein is Glutathione S-transferase 2 (GST2).